Here is a 257-residue protein sequence, read N- to C-terminus: tRNA-cytidine(32) 2-sulfurtransferase (257 aa).

The PP-loop motif signature appears at 37 to 42; it reads SGGKDS. [4Fe-4S] cluster contacts are provided by Cys-112, Cys-115, and Cys-202.

Belongs to the TtcA family. Homodimer. The cofactor is Mg(2+). [4Fe-4S] cluster is required as a cofactor.

Its subcellular location is the cytoplasm. It carries out the reaction cytidine(32) in tRNA + S-sulfanyl-L-cysteinyl-[cysteine desulfurase] + AH2 + ATP = 2-thiocytidine(32) in tRNA + L-cysteinyl-[cysteine desulfurase] + A + AMP + diphosphate + H(+). It functions in the pathway tRNA modification. Catalyzes the ATP-dependent 2-thiolation of cytidine in position 32 of tRNA, to form 2-thiocytidine (s(2)C32). The sulfur atoms are provided by the cysteine/cysteine desulfurase (IscS) system. This chain is tRNA-cytidine(32) 2-sulfurtransferase, found in Geobacter metallireducens (strain ATCC 53774 / DSM 7210 / GS-15).